Consider the following 105-residue polypeptide: Thioredoxin (105 aa).

In terms of domain architecture, Thioredoxin spans 1–105; the sequence is ATMTLTDANF…LEAQLADVLQ (105 aa). A disulfide bridge links Cys29 with Cys32.

Its function is as follows. Participates in various redox reactions through the reversible oxidation of its active center dithiol to a disulfide and catalyzes dithiol-disulfide exchange reactions. This Alicyclobacillus acidocaldarius subsp. acidocaldarius (Bacillus acidocaldarius) protein is Thioredoxin (trxA).